We begin with the raw amino-acid sequence, 448 residues long: MSQQEFDVLVIGAGISGAALFYELARYTNIKNIALIEKYNTAATLNSKGTSNSQTIHCGDIETNYTLEKARKVKRTADMIVKYGLMQNAQNNFMFSHQKMALAVGDIECDYMKKRYEEFKELYPYIKFFDKAKIKQIEPKVVLGEDCNQDRPENICAMGVESGEVFTTVDFGKMSINLIEQAQKQNKNTFVAFNQEIIHIEKKDDIFILKTSNHQEYHAKSVVVNAGAHSLYLAHKMNLGMDKSCWPVAGSFYLTKQKLLNGKVYMVQNPKLPFAALHGDPDLLADMNTRFGPTALVIPKLERYHGLKSVPEFFEALKLDKTVLKVTFNMFKDATIRNYIFYNYLFELPFVDKSLFVKDAKKIVPSLKASDIYYAKGFGGVRPQVIDKTKGELMLGEASITETPGIIFNMTPSPGATSCLGNAERDAKLVCNYLGMEFNEDKFSSELL.

It belongs to the MQO family. FAD is required as a cofactor.

It catalyses the reaction (S)-malate + a quinone = a quinol + oxaloacetate. The protein operates within carbohydrate metabolism; tricarboxylic acid cycle; oxaloacetate from (S)-malate (quinone route): step 1/1. Its function is as follows. Catalyzes oxidation of malate to oxaloacetate in the citric acid cycle. Donates electrons to quinones of the electron transfer chain. This chain is Probable malate:quinone oxidoreductase (mqo), found in Campylobacter jejuni subsp. jejuni serotype O:2 (strain ATCC 700819 / NCTC 11168).